The following is a 472-amino-acid chain: Citrate synthase, mitochondrial (472 aa).

Active-site residues include His308, His354, and Asp409.

It belongs to the citrate synthase family. Homodimer.

The protein localises to the mitochondrion matrix. It catalyses the reaction oxaloacetate + acetyl-CoA + H2O = citrate + CoA + H(+). It functions in the pathway carbohydrate metabolism; tricarboxylic acid cycle; isocitrate from oxaloacetate: step 1/2. In Daucus carota (Wild carrot), this protein is Citrate synthase, mitochondrial (CS).